Consider the following 381-residue polypeptide: Chaperone protein DnaJ (381 aa).

Positions 5–70 (DFYEVLGVSR…QKKAAYDQYG (66 aa)) constitute a J domain. The CR-type zinc finger occupies 136–214 (GVSKEIEVPT…CHGQGRKQKT (79 aa)). Zn(2+) is bound by residues Cys149, Cys152, Cys166, Cys169, Cys188, Cys191, Cys202, and Cys205. CXXCXGXG motif repeat units lie at residues 149–156 (CDICDGSG), 166–173 (CGTCHGHG), 188–195 (CPTCNGKG), and 202–209 (CNSCHGQG).

Belongs to the DnaJ family. As to quaternary structure, homodimer. Zn(2+) is required as a cofactor.

It localises to the cytoplasm. In terms of biological role, participates actively in the response to hyperosmotic and heat shock by preventing the aggregation of stress-denatured proteins and by disaggregating proteins, also in an autonomous, DnaK-independent fashion. Unfolded proteins bind initially to DnaJ; upon interaction with the DnaJ-bound protein, DnaK hydrolyzes its bound ATP, resulting in the formation of a stable complex. GrpE releases ADP from DnaK; ATP binding to DnaK triggers the release of the substrate protein, thus completing the reaction cycle. Several rounds of ATP-dependent interactions between DnaJ, DnaK and GrpE are required for fully efficient folding. Also involved, together with DnaK and GrpE, in the DNA replication of plasmids through activation of initiation proteins. This Vibrio atlanticus (strain LGP32) (Vibrio splendidus (strain Mel32)) protein is Chaperone protein DnaJ.